Here is a 32-residue protein sequence, read N- to C-terminus: ANIQSFSFKNFNSPSFILQGDATVSSGKLQLP.

It belongs to the leguminous lectin family. Homotetramer.

In terms of biological role, metalloglycoprotein, containing Ca, Mg, Mn, and Zn and the carbohydrates galactose, glucosamine, mannose, and fucose. It agglutinates erythrocytes of blood group A1. In Macrotyloma axillare (Perennial horse gram), this protein is Lectin.